A 298-amino-acid polypeptide reads, in one-letter code: Protoheme IX farnesyltransferase (298 aa).

Helical transmembrane passes span 16 to 36 (VVALIVFTALVGMFLAIPDMP), 45 to 65 (ALGFLGIWLAASAAAAINQLL), 93 to 113 (VFAGVLIVISMTILVVWVNVI), 114 to 134 (TAVLTFASLIGYAVIYTVYLK), 141 to 161 (IVIGGLAGATPPMLGWAAVTG), 172 to 192 (SLLVLIIFIWTPPHFWALAIF), 218 to 238 (ILVYTVLLAIVTLAPVAVGMS), 241 to 261 (FYLGGAAVLNAVFLWYAWRML), and 277 to 297 (IVYLMALFAFLMVDHLLLPWV).

The protein belongs to the UbiA prenyltransferase family. Protoheme IX farnesyltransferase subfamily.

The protein resides in the cell inner membrane. It carries out the reaction heme b + (2E,6E)-farnesyl diphosphate + H2O = Fe(II)-heme o + diphosphate. It participates in porphyrin-containing compound metabolism; heme O biosynthesis; heme O from protoheme: step 1/1. Converts heme B (protoheme IX) to heme O by substitution of the vinyl group on carbon 2 of heme B porphyrin ring with a hydroxyethyl farnesyl side group. This Xanthomonas axonopodis pv. citri (strain 306) protein is Protoheme IX farnesyltransferase.